The chain runs to 338 residues: Nicotinate-nucleotide--dimethylbenzimidazole phosphoribosyltransferase (338 aa).

E306 serves as the catalytic Proton acceptor.

This sequence belongs to the CobT family.

The enzyme catalyses 5,6-dimethylbenzimidazole + nicotinate beta-D-ribonucleotide = alpha-ribazole 5'-phosphate + nicotinate + H(+). Its pathway is nucleoside biosynthesis; alpha-ribazole biosynthesis; alpha-ribazole from 5,6-dimethylbenzimidazole: step 1/2. Catalyzes the synthesis of alpha-ribazole-5'-phosphate from nicotinate mononucleotide (NAMN) and 5,6-dimethylbenzimidazole (DMB). The chain is Nicotinate-nucleotide--dimethylbenzimidazole phosphoribosyltransferase from Cereibacter sphaeroides (strain KD131 / KCTC 12085) (Rhodobacter sphaeroides).